The following is a 190-amino-acid chain: Elongation factor P 1 (190 aa).

The protein belongs to the elongation factor P family.

The protein resides in the cytoplasm. Its pathway is protein biosynthesis; polypeptide chain elongation. In terms of biological role, involved in peptide bond synthesis. Stimulates efficient translation and peptide-bond synthesis on native or reconstituted 70S ribosomes in vitro. Probably functions indirectly by altering the affinity of the ribosome for aminoacyl-tRNA, thus increasing their reactivity as acceptors for peptidyl transferase. This is Elongation factor P 1 (efp1) from Lactobacillus johnsonii (strain CNCM I-12250 / La1 / NCC 533).